Consider the following 146-residue polypeptide: Large ribosomal subunit protein uL15 (146 aa).

The interval 1-58 (MRLHELHPAPGSRPRATRVGRGIGSGLGKTSGRGHKGQKARSGGGVRRGFEGGQMPLT) is disordered. Residues 21 to 31 (RGIGSGLGKTS) show a composition bias toward gly residues.

Belongs to the universal ribosomal protein uL15 family. Part of the 50S ribosomal subunit.

In terms of biological role, binds to the 23S rRNA. In Moorella thermoacetica (strain ATCC 39073 / JCM 9320), this protein is Large ribosomal subunit protein uL15.